An 841-amino-acid polypeptide reads, in one-letter code: Serine/threonine-protein kinase/endoribonuclease IRE1a (841 aa).

An N-terminal signal peptide occupies residues 1-30 (MPPRCPFLRHLFFLLLLLSPWIMSPCGGAA). The Lumenal portion of the chain corresponds to 31–323 (DDVTYPIVPS…KQKYTYLFGQ (293 aa)). Residues asparagine 100, asparagine 104, asparagine 119, asparagine 132, and asparagine 221 are each glycosylated (N-linked (GlcNAc...) asparagine). The helical transmembrane segment at 324 to 344 (WSPVKLLAPLVLLGVVVSVFI) threads the bilayer. Residues 345–841 (KKFSSRGSDV…FRKYFKCDII (497 aa)) are Cytoplasmic-facing. The tract at residues 352–382 (SDVSLKAGPSKKKKNRKSAKDTNRQSVPRGQ) is disordered. Residues 414–704 (FLSSKEIAKG…ATEVLLHPMF (291 aa)) enclose the Protein kinase domain. ATP-binding positions include 420–428 (IAKGSNGTV) and lysine 442. The active-site Proton acceptor is the aspartate 570. The KEN domain maps to 707–838 (SEMRLSFLRD…EEVFRKYFKC (132 aa)).

It belongs to the protein kinase superfamily. Ser/Thr protein kinase family. In terms of assembly, homodimer; disulfide-linked. Dimer formation is driven by hydrophobic interactions within the N-terminal luminal domains and stabilized by disulfide bridges. Mg(2+) serves as cofactor. Autophosphorylated. As to expression, ubiquitous. Detected in the vascular bundles of young plants, leaves, roots, seedlings and in the receptacles of flowers and vascular bundles of the petals.

Its subcellular location is the endoplasmic reticulum membrane. It carries out the reaction L-seryl-[protein] + ATP = O-phospho-L-seryl-[protein] + ADP + H(+). It catalyses the reaction L-threonyl-[protein] + ATP = O-phospho-L-threonyl-[protein] + ADP + H(+). Its activity is regulated as follows. The kinase domain is activated by trans-autophosphorylation. Kinase activity is required for activation of the endoribonuclease domain. In terms of biological role, senses unfolded proteins in the lumen of the endoplasmic reticulum via its N-terminal domain which leads to enzyme auto-activation. The active endoribonuclease domain splices bZIP60 mRNA to generate a new C-terminus, converting it into a potent unfolded-protein response transcriptional activator which then induces transcription of UPR target genes. Involved in organ growth regulation. Plays a role in plant immunity and abiotic stress responses. The chain is Serine/threonine-protein kinase/endoribonuclease IRE1a (IRE1A) from Arabidopsis thaliana (Mouse-ear cress).